The chain runs to 241 residues: Glutathione S-transferase omega-1 (241 aa).

An N-acetylserine modification is found at Ser-2. In terms of domain architecture, GST N-terminal spans 22 to 101 (GSIRIYSMRF…YLDEAYPGKK (80 aa)). Cys-32 acts as the Nucleophile in catalysis. An N6-acetyllysine modification is found at Lys-57. Residues Lys-59, Val-72, and 85-86 (ES) each bind glutathione. The 125-residue stretch at 106 to 230 (DPYEKACQKM…DWQGFLELYL (125 aa)) folds into the GST C-terminal domain. Ser-129 carries the phosphoserine modification. Lys-143, Lys-148, and Lys-152 each carry N6-acetyllysine.

Belongs to the GST superfamily. Omega family. In terms of assembly, homodimer. Ubiquitous. Highest expression in liver, pancreas, skeletal muscle, spleen, thymus, colon, blood leukocyte and heart. Lowest expression in brain, placenta and lung.

It is found in the cytoplasm. It localises to the cytosol. The enzyme catalyses RX + glutathione = an S-substituted glutathione + a halide anion + H(+). It carries out the reaction L-dehydroascorbate + 2 glutathione = glutathione disulfide + L-ascorbate. The catalysed reaction is methylarsonate + 2 glutathione + H(+) = methylarsonous acid + glutathione disulfide + H2O. With respect to regulation, monomethylarsonic acid reductase activity is competitively inhibited by 1-chloro 2,4-dinitrobenzene (CDNB) and by deoxycholate. Exhibits glutathione-dependent thiol transferase and dehydroascorbate reductase activities. Has S-(phenacyl)glutathione reductase activity. Also has glutathione S-transferase activity. Participates in the biotransformation of inorganic arsenic and reduces monomethylarsonic acid (MMA) and dimethylarsonic acid. The sequence is that of Glutathione S-transferase omega-1 (GSTO1) from Homo sapiens (Human).